Here is a 297-residue protein sequence, read N- to C-terminus: MNKIVVLTGPTASGKSSLSIQMAQRLNGEIVSADSMQIYRNLDVGTAKVTKEEQNIVPHHLIDIVDLTANYSVGDFIIAADKVIADIISRGKLPIIVGGTGLYVKALLGFQELEYAASDTEEVHKLNAYELDKLVVELKSLDINRAQKVDLKNKQRVIRAIQIAKYGKKDAKLTQRPKYDALVIGLDWPRELLYERINHRVTQMVQDGVLKEAQTILDAGGEKLQSGKAIGYKEFFPYLRDQVTLDKAINQLQQDSRRYAKRQLTYLRHQIPGLVWLKGQTAELRLTEMIEGWLSLK.

9 to 16 (GPTASGKS) contributes to the ATP binding site. Residue 11–16 (TASGKS) participates in substrate binding. Interaction with substrate tRNA regions lie at residues 34 to 37 (DSMQ) and 155 to 159 (QRVIR).

Belongs to the IPP transferase family. In terms of assembly, monomer. Mg(2+) serves as cofactor.

It carries out the reaction adenosine(37) in tRNA + dimethylallyl diphosphate = N(6)-dimethylallyladenosine(37) in tRNA + diphosphate. Functionally, catalyzes the transfer of a dimethylallyl group onto the adenine at position 37 in tRNAs that read codons beginning with uridine, leading to the formation of N6-(dimethylallyl)adenosine (i(6)A). This is tRNA dimethylallyltransferase from Leuconostoc mesenteroides subsp. mesenteroides (strain ATCC 8293 / DSM 20343 / BCRC 11652 / CCM 1803 / JCM 6124 / NCDO 523 / NBRC 100496 / NCIMB 8023 / NCTC 12954 / NRRL B-1118 / 37Y).